Here is a 266-residue protein sequence, read N- to C-terminus: Glucosamine-6-phosphate deaminase (266 aa).

The active-site Proton acceptor; for enolization step is aspartate 72. The active-site For ring-opening step is aspartate 141. Residue histidine 143 is the Proton acceptor; for ring-opening step of the active site. The For ring-opening step role is filled by glutamate 148.

This sequence belongs to the glucosamine/galactosamine-6-phosphate isomerase family. NagB subfamily. As to quaternary structure, homohexamer.

It catalyses the reaction alpha-D-glucosamine 6-phosphate + H2O = beta-D-fructose 6-phosphate + NH4(+). It participates in amino-sugar metabolism; N-acetylneuraminate degradation; D-fructose 6-phosphate from N-acetylneuraminate: step 5/5. Its activity is regulated as follows. Allosterically activated by N-acetylglucosamine 6-phosphate (GlcNAc6P). Its function is as follows. Catalyzes the reversible isomerization-deamination of glucosamine 6-phosphate (GlcN6P) to form fructose 6-phosphate (Fru6P) and ammonium ion. The protein is Glucosamine-6-phosphate deaminase of Citrobacter koseri (strain ATCC BAA-895 / CDC 4225-83 / SGSC4696).